Here is a 149-residue protein sequence, read N- to C-terminus: Transcriptional repressor NrdR (149 aa).

The segment at 3–34 (CPFCSATDTKVIDSRLVAEGHQVRRRRECTEC) is a zinc-finger region. Residues 49-139 (PRVIKRDGSR…VYRAFEDVSE (91 aa)) form the ATP-cone domain.

It belongs to the NrdR family. Requires Zn(2+) as cofactor.

Functionally, negatively regulates transcription of bacterial ribonucleotide reductase nrd genes and operons by binding to NrdR-boxes. The protein is Transcriptional repressor NrdR of Shewanella putrefaciens (strain CN-32 / ATCC BAA-453).